The primary structure comprises 295 residues: HTH-type transcriptional regulator TrpI (295 aa).

Residues 6-63 (PSLNALRAFEAAARLHSISLAAEELHVTHGAVSRQVRLLEDDLGVALFGKDGRGVKLT) form the HTH lysR-type domain. Residues 23 to 42 (ISLAAEELHVTHGAVSRQVR) constitute a DNA-binding region (H-T-H motif).

This sequence belongs to the LysR transcriptional regulatory family. Homotetramer.

Functionally, activates the expression of the trpBA genes, which encode the two tryptophan synthase subunits, and represses initiation at its own promoter. Acts by binding to two adjacent sites in the intergenic region. In the absence of the inducer indoleglycerol phosphate (InGP), TrpI binds to site I. In the presence of InGP, TrpI binds to site I and site II. Binding to site II is site I dependent. InGP strongly stimulates binding to site II and is required for maximal activation of trpBA. In Pseudomonas aeruginosa (strain ATCC 15692 / DSM 22644 / CIP 104116 / JCM 14847 / LMG 12228 / 1C / PRS 101 / PAO1), this protein is HTH-type transcriptional regulator TrpI.